Consider the following 357-residue polypeptide: MTAYRGKYADELIANASYIATPGKVILAADESTGTIGKRFPSINVENVESNRRALRELLFTTPGALPYLSGVILFEETLYQKTADGKPFVDAMKDGGVLPGIKVDKGTVELAGTNGETTTQGLDGLAQRCAQYYTAGARFAKWRAVLKIGPTEPSPLAILENANGLARYGIICQENGLVPIVEPEILVDGTHDIDRCAEVSERVLAACYKALNDHHVLLEGTSLKPNIVTPGSESKKVTPEVIAEYTVRTLQRTVPQAVPGVMFLSGGQSEEEATLNLNAMNKLETKKPWTLSFSYGRALQQSTLKAWQGKEENVAKAQEVFLARAKGNSEATLGKYQGGAGGADASESLHVKDYKY.

Positions 53 and 142 each coordinate substrate. Glu183 (proton acceptor) is an active-site residue. The active-site Schiff-base intermediate with dihydroxyacetone-P is the Lys225.

Belongs to the class I fructose-bisphosphate aldolase family.

The protein resides in the cytoplasm. It catalyses the reaction beta-D-fructose 1,6-bisphosphate = D-glyceraldehyde 3-phosphate + dihydroxyacetone phosphate. Its pathway is carbohydrate degradation; glycolysis; D-glyceraldehyde 3-phosphate and glycerone phosphate from D-glucose: step 4/4. This chain is Fructose-bisphosphate aldolase, cytoplasmic isozyme, found in Spinacia oleracea (Spinach).